The chain runs to 47 residues: Large ribosomal subunit protein bL34 (47 aa).

Belongs to the bacterial ribosomal protein bL34 family.

This chain is Large ribosomal subunit protein bL34, found in Corynebacterium glutamicum (strain R).